Consider the following 406-residue polypeptide: Exodeoxyribonuclease 7 large subunit (406 aa).

This sequence belongs to the XseA family. As to quaternary structure, heterooligomer composed of large and small subunits.

It is found in the cytoplasm. It catalyses the reaction Exonucleolytic cleavage in either 5'- to 3'- or 3'- to 5'-direction to yield nucleoside 5'-phosphates.. Functionally, bidirectionally degrades single-stranded DNA into large acid-insoluble oligonucleotides, which are then degraded further into small acid-soluble oligonucleotides. This is Exodeoxyribonuclease 7 large subunit from Desulfitobacterium hafniense (strain Y51).